Consider the following 39-residue polypeptide: Neuropeptide F (39 aa).

A Phenylalanine amide modification is found at Phe39.

Belongs to the NPY family. Neuronal somata and fibers.

It localises to the secreted. In terms of biological role, may have an important physiological role in neuroregulation. This is Neuropeptide F from Cornu aspersum (Brown garden snail).